The chain runs to 511 residues: MSAAVVRRLALNSPRHTIISRRAVHLQPLCGQQYVKSKLRNWTCLTFLGESVTAGSSIPLRKDAKPFKLAVKDNIATADFPTQCASQILSSHPSPFEATVVRQLRERGASIVGKTNMDEFGMGSHSTNSIHGAVRNPLAEDDDVSAGGSSGGSAVAVRLGDADVALGTDTGGSIRLPAAYTGTVGYKPSYGMISRFGVVPYANSLDTVGFLASEVKPIHDLVFKTGLYQEHDSSDPTSLPIASRKRCAETTPSTLPDLSKLNIGIPLEYNIEELDPSIRDAWVAAASALEAQGATLVPISLPSTTEALCAYYVLAPAEASSNLAKYDGVRYGKRGEGSDAVGETLYSDTRGAGFGDEVKRRILLGTYSLSSEAMDNYFIQAQKVRRMVQQDFDRVFRLDNPLYEPAQFDLSDMAEATGMEDKRGPLQVDFILCPTAPTFPPRLDEIKEQSSVDVYMNDVFTVPASLAGLPAVSVPAKVEGSRFPAGLQVIGQYWDDQRVLLLAEKLKEAVA.

Residues lysine 72 and serine 149 each act as charge relay system in the active site. The active-site Acyl-ester intermediate is serine 173.

Belongs to the amidase family. GatA subfamily. As to quaternary structure, subunit of the heterotrimeric GatCAB amidotransferase (AdT) complex, composed of A, B and C subunits.

The protein resides in the mitochondrion. It catalyses the reaction L-glutamyl-tRNA(Gln) + L-glutamine + ATP + H2O = L-glutaminyl-tRNA(Gln) + L-glutamate + ADP + phosphate + H(+). In terms of biological role, allows the formation of correctly charged Gln-tRNA(Gln) through the transamidation of misacylated Glu-tRNA(Gln) in the mitochondria. The reaction takes place in the presence of glutamine and ATP through an activated gamma-phospho-Glu-tRNA(Gln). The sequence is that of Glutamyl-tRNA(Gln) amidotransferase subunit A, mitochondrial from Fusarium vanettenii (strain ATCC MYA-4622 / CBS 123669 / FGSC 9596 / NRRL 45880 / 77-13-4) (Fusarium solani subsp. pisi).